We begin with the raw amino-acid sequence, 76 residues long: Large ribosomal subunit protein bL31 (76 aa).

Belongs to the bacterial ribosomal protein bL31 family. Type A subfamily. Part of the 50S ribosomal subunit.

Functionally, binds the 23S rRNA. In Methylocella silvestris (strain DSM 15510 / CIP 108128 / LMG 27833 / NCIMB 13906 / BL2), this protein is Large ribosomal subunit protein bL31.